The chain runs to 88 residues: Putative regulatory protein PCC7424_3427 (88 aa).

The protein belongs to the RemA family.

The polypeptide is Putative regulatory protein PCC7424_3427 (Gloeothece citriformis (strain PCC 7424) (Cyanothece sp. (strain PCC 7424))).